The following is a 263-amino-acid chain: Hydroxyethylthiazole kinase (263 aa).

Position 39 (methionine 39) interacts with substrate. 2 residues coordinate ATP: lysine 115 and threonine 160. Glycine 187 provides a ligand contact to substrate.

The protein belongs to the Thz kinase family. The cofactor is Mg(2+).

It carries out the reaction 5-(2-hydroxyethyl)-4-methylthiazole + ATP = 4-methyl-5-(2-phosphooxyethyl)-thiazole + ADP + H(+). The protein operates within cofactor biosynthesis; thiamine diphosphate biosynthesis; 4-methyl-5-(2-phosphoethyl)-thiazole from 5-(2-hydroxyethyl)-4-methylthiazole: step 1/1. Functionally, catalyzes the phosphorylation of the hydroxyl group of 4-methyl-5-beta-hydroxyethylthiazole (THZ). This is Hydroxyethylthiazole kinase from Staphylococcus haemolyticus (strain JCSC1435).